We begin with the raw amino-acid sequence, 724 residues long: Long-chain-fatty-acid--CoA ligase ACSBG1 (724 aa).

A disordered region spans residues 1–30 (MPRNSGAGYGCPHGDPSMLDSRETPQESRQ). Basic and acidic residues predominate over residues 20 to 30 (DSRETPQESRQ). Residues S53 and S56 each carry the phosphoserine modification. Residues 282 to 290 (TSGTTGNPK), 472 to 477 (AGYGLS), D550, and R565 contribute to the ATP site. At Y658 the chain carries Phosphotyrosine. Residue K701 participates in ATP binding.

The protein belongs to the ATP-dependent AMP-binding enzyme family. Bubblegum subfamily. As to expression, expressed primarily in brain. Expressed at lower level in testis and adrenal gland. Present in all regions of brain except pituitary.

It localises to the cytoplasm. Its subcellular location is the cytoplasmic vesicle. The protein resides in the microsome. It is found in the endoplasmic reticulum. The protein localises to the cell membrane. The enzyme catalyses a long-chain fatty acid + ATP + CoA = a long-chain fatty acyl-CoA + AMP + diphosphate. It catalyses the reaction (E)-hexadec-2-enoate + ATP + CoA = (2E)-hexadecenoyl-CoA + AMP + diphosphate. The catalysed reaction is hexadecanoate + ATP + CoA = hexadecanoyl-CoA + AMP + diphosphate. Functionally, catalyzes the conversion of fatty acids such as long-chain and very long-chain fatty acids to their active form acyl-CoAs for both synthesis of cellular lipids, and degradation via beta-oxidation. Can activate diverse saturated, monosaturated and polyunsaturated fatty acids. In Homo sapiens (Human), this protein is Long-chain-fatty-acid--CoA ligase ACSBG1.